Reading from the N-terminus, the 322-residue chain is Ribonucleoside-diphosphate reductase subunit beta nrdF1 (322 aa).

3 residues coordinate Fe cation: D70, E101, and H104. Y108 is an active-site residue. Fe cation is bound by residues E161, E195, and H198.

The protein belongs to the ribonucleoside diphosphate reductase small chain family. In terms of assembly, tetramer of two alpha and two beta subunits. Fe cation serves as cofactor.

It catalyses the reaction a 2'-deoxyribonucleoside 5'-diphosphate + [thioredoxin]-disulfide + H2O = a ribonucleoside 5'-diphosphate + [thioredoxin]-dithiol. Its function is as follows. Provides the precursors necessary for DNA synthesis. Catalyzes the biosynthesis of deoxyribonucleotides from the corresponding ribonucleotides. The protein is Ribonucleoside-diphosphate reductase subunit beta nrdF1 (nrdF1) of Mycobacterium tuberculosis (strain CDC 1551 / Oshkosh).